Here is a 101-residue protein sequence, read N- to C-terminus: Small ribosomal subunit protein bS18c (101 aa).

The segment covering 1–19 has biased composition (basic residues); sequence MDKSKRPFRKSKRSFRRRL. 2 disordered regions span residues 1–23 and 82–101; these read MDKS…PPIG and KQFE…TRNK.

It belongs to the bacterial ribosomal protein bS18 family. Part of the 30S ribosomal subunit.

The protein resides in the plastid. Its subcellular location is the chloroplast. The protein is Small ribosomal subunit protein bS18c of Drimys granadensis.